Reading from the N-terminus, the 181-residue chain is MIKLFTLKQQKKDGEQKGSQQKKASAAQLRIQKDINELNLPNTCATDFPDPNDLLNFKLIISPDEGFYRDGRFVFNFRVGSNYPHEPPKVKCATQVYHPNIDLDGNVCLNILREDWNPVLNINSIVYGLQFLFLEPNPEDPLNKEAADVLQTNRRQFENNVKKAMRGGCVGETYFECCLLK.

Interaction with Uba3 regions lie at residues 4-7 (LFTL) and 24-54 (ASAA…PNDL). The UBC core domain occupies 26–170 (AAQLRIQKDI…VKKAMRGGCV (145 aa)). The Glycyl thioester intermediate role is filled by Cys108.

The protein belongs to the ubiquitin-conjugating enzyme family. UBC12 subfamily. In terms of assembly, interacts with Uba3. As to expression, expressed in the wing disk.

It catalyses the reaction [E1 NEDD8-activating enzyme]-S-[NEDD8 protein]-yl-L-cysteine + [E2 NEDD8-conjugating enzyme]-L-cysteine = [E1 NEDD8-activating enzyme]-L-cysteine + [E2 NEDD8-conjugating enzyme]-S-[NEDD8-protein]-yl-L-cysteine.. It functions in the pathway protein modification; protein neddylation. Accepts the ubiquitin-like protein Nedd8 from the Uba3-APP-BP1 E1 complex and catalyzes its covalent attachment to other proteins. Required for Cul1 and Cul3 neddylation. Negatively regulates full-length ci stability and hedgehog signaling. The sequence is that of Nedd8-conjugating enzyme UbcE2M from Drosophila melanogaster (Fruit fly).